Here is a 297-residue protein sequence, read N- to C-terminus: Homoserine kinase (297 aa).

79–89 serves as a coordination point for ATP; the sequence is PIARGLGSSGA.

This sequence belongs to the GHMP kinase family. Homoserine kinase subfamily.

It is found in the cytoplasm. The catalysed reaction is L-homoserine + ATP = O-phospho-L-homoserine + ADP + H(+). The protein operates within amino-acid biosynthesis; L-threonine biosynthesis; L-threonine from L-aspartate: step 4/5. In terms of biological role, catalyzes the ATP-dependent phosphorylation of L-homoserine to L-homoserine phosphate. The sequence is that of Homoserine kinase from Pyrobaculum neutrophilum (strain DSM 2338 / JCM 9278 / NBRC 100436 / V24Sta) (Thermoproteus neutrophilus).